The primary structure comprises 481 residues: uncharacterized protein (481 aa).

Transmembrane regions (helical) follow at residues 14 to 34 (LGFCSVVMLGINSIIGAGIFL), 46 to 66 (FAPMAYVLAGIFAGVVAIVFA), 90 to 110 (IGIYVGVTHAITASIAWGVLA), 134 to 154 (FSVKTLTFLGFIGVLLAINLF), 167 to 187 (TVGKAFALSAFIVGGLWIITT), 218 to 238 (FSSMALATIVALYAFTGFESI), 258 to 278 (IAIFSVGAIYLLTLTVAMLLG), 303 to 323 (IIVVGALISMFGINVAASFGA), 377 to 397 (LAVIARFVQFIIVPIALIALA), 411 to 431 (AFTDKVLPLVAIVVSVGLAVS), and 446 to 466 (YFSIALIVITFIVVPAMAYLH).

It belongs to the amino acid-polyamine-organocation (APC) superfamily.

It localises to the cell membrane. Functionally, probable amino-acid or metabolite transport protein. This is an uncharacterized protein from Mycobacterium bovis (strain ATCC BAA-935 / AF2122/97).